A 133-amino-acid chain; its full sequence is Holo-[acyl-carrier-protein] synthase (133 aa).

2 residues coordinate Mg(2+): Asp8 and Glu57.

Belongs to the P-Pant transferase superfamily. AcpS family. It depends on Mg(2+) as a cofactor.

It localises to the cytoplasm. It carries out the reaction apo-[ACP] + CoA = holo-[ACP] + adenosine 3',5'-bisphosphate + H(+). Transfers the 4'-phosphopantetheine moiety from coenzyme A to a Ser of acyl-carrier-protein. This is Holo-[acyl-carrier-protein] synthase from Bartonella bacilliformis (strain ATCC 35685 / KC583 / Herrer 020/F12,63).